A 176-amino-acid polypeptide reads, in one-letter code: NAD(P)H-quinone oxidoreductase subunit 6, chloroplastic (176 aa).

5 consecutive transmembrane segments (helical) span residues Phe10–Thr30, Pro32–Pro52, Ala60–Phe80, Ile107–Thr127, and Phe152–Ala172.

The protein belongs to the complex I subunit 6 family. In terms of assembly, NDH is composed of at least 16 different subunits, 5 of which are encoded in the nucleus.

Its subcellular location is the plastid. It localises to the chloroplast thylakoid membrane. The enzyme catalyses a plastoquinone + NADH + (n+1) H(+)(in) = a plastoquinol + NAD(+) + n H(+)(out). The catalysed reaction is a plastoquinone + NADPH + (n+1) H(+)(in) = a plastoquinol + NADP(+) + n H(+)(out). Its function is as follows. NDH shuttles electrons from NAD(P)H:plastoquinone, via FMN and iron-sulfur (Fe-S) centers, to quinones in the photosynthetic chain and possibly in a chloroplast respiratory chain. The immediate electron acceptor for the enzyme in this species is believed to be plastoquinone. Couples the redox reaction to proton translocation, and thus conserves the redox energy in a proton gradient. The chain is NAD(P)H-quinone oxidoreductase subunit 6, chloroplastic (ndhG) from Buxus microphylla (Littleleaf boxwood).